The chain runs to 2643 residues: BAH and coiled-coil domain-containing protein 1 (2643 aa).

Disordered regions lie at residues 23-45 (SAAAAARLAPAGPAAQPAAHFQP) and 84-106 (SAASAHPSGPTSSPSEPAYRGSH). Residue lysine 220 is modified to N6-acetyllysine. Basic and acidic residues-rich tracts occupy residues 224–249 (KEKVSKGAEGRERPAVEEDSGKDRQK) and 683–702 (ERPDCARSREHEAPHGDGEV). Disordered regions lie at residues 224–273 (KEKV…SCEG), 674–704 (PATKGPGPVERPDCARSREHEAPHGDGEVRQ), 721–758 (GRPDTAYNTNSGRQGRAAPTFKGAGGPRASHALDLESE), 985–1023 (RKPEDRHMELEEAAQEKTPKSTHKPVALTPMAKGTPSSA), and 1038–1299 (TLKT…KALP). The span at 985–1003 (RKPEDRHMELEEAAQEKTP) shows a compositional bias: basic and acidic residues. Residues 1133-1149 (RPEPPRTFLPGEPPPCS) are compositionally biased toward pro residues. Over residues 1210–1224 (ATGQTNSTQGGMQNE) the composition is skewed to polar residues. A compositionally biased stretch (acidic residues) spans 1269–1284 (QEEETQLEESGGDSEV). 2 coiled-coil regions span residues 1346–1373 (ALLSELADLETQRQKSELSMQEDEDVLA) and 1437–1486 (LKAA…SSRS). Positions 1466–1484 (QRELARLQRRHDHEREESS) are enriched in basic and acidic residues. 8 disordered regions span residues 1466–1520 (QREL…DSKK), 1537–1559 (GDEPPRKRSKLGKSPYTGLQSVS), 1604–1641 (KEAAPGGRIQKKLSRAKSVTASGAARHPHPDGDSGREM), 1746–1781 (RAPGRRPPGAPGKKKAKGKVKTGLRTEPGTATSRDT), 1875–1896 (FDEDDTSFSDEEEEEEEAGVQL), 2055–2124 (SSCR…HFLG), 2322–2341 (CPSSYSDEDEDGPGLATGVP), and 2349–2386 (SMSSSSSGSSTSSSSGSVSTSSLCSSDNEDSSYSSDDE). Basic residues predominate over residues 1487–1501 (PARRGPGRPRKRKHS). The span at 1631-1641 (PHPDGDSGREM) shows a compositional bias: basic and acidic residues. Residues 1757 to 1767 (GKKKAKGKVKT) show a composition bias toward basic residues. The segment covering 1875–1892 (FDEDDTSFSDEEEEEEEA) has biased composition (acidic residues). The segment covering 2349–2374 (SMSSSSSGSSTSSSSGSVSTSSLCSS) has biased composition (low complexity). Over residues 2375–2386 (DNEDSSYSSDDE) the composition is skewed to acidic residues. The region spanning 2517–2637 (ETLRIGDCAV…PTTGRLVTAD (121 aa)) is the BAH domain.

This is BAH and coiled-coil domain-containing protein 1 (Bahcc1) from Mus musculus (Mouse).